A 112-amino-acid polypeptide reads, in one-letter code: MSIKIRLQRKGRKKKAFYTIVVSNSRSPRNGKFLEKIGFYNPNTNPYTISINVDKAVNWLIKGAQPTCTVKSFFLKEGIYYKKYLLSGVKISKSEIEQKLKAWKEKKIILHK.

It belongs to the bacterial ribosomal protein bS16 family.

The sequence is that of Small ribosomal subunit protein bS16 from Karelsulcia muelleri (strain GWSS) (Sulcia muelleri).